Here is a 225-residue protein sequence, read N- to C-terminus: Rho GDP-dissociation inhibitor 3 (225 aa).

It belongs to the Rho GDI family. In terms of tissue distribution, primarily expressed in pancreas and brain.

Its subcellular location is the cytoplasm. Functionally, inhibits GDP/GTP exchange reaction of RhoB. Interacts specifically with the GDP- and GTP-bound forms of post-translationally processed Rhob and Rhog proteins, both of which show a growth-regulated expression in mammalian cells. Stimulates the release of the GDP-bound but not the GTP-bound RhoB protein. Also inhibits the GDP/GTP exchange of RhoB but shows less ability to inhibit the dissociation of prebound GTP. This chain is Rho GDP-dissociation inhibitor 3 (ARHGDIG), found in Homo sapiens (Human).